Here is a 224-residue protein sequence, read N- to C-terminus: Putative adhesin A1C_06425 (224 aa).

The first 22 residues, 1-22 (MKKLLLIATTSATILSSSISFA), serve as a signal peptide directing secretion.

The polypeptide is Putative adhesin A1C_06425 (Rickettsia akari (strain Hartford)).